An 860-amino-acid chain; its full sequence is DNA mismatch repair protein MutS (860 aa).

618–625 (GPNMGGKS) contacts ATP.

This sequence belongs to the DNA mismatch repair MutS family.

Its function is as follows. This protein is involved in the repair of mismatches in DNA. It is possible that it carries out the mismatch recognition step. This protein has a weak ATPase activity. The protein is DNA mismatch repair protein MutS of Hahella chejuensis (strain KCTC 2396).